A 275-amino-acid polypeptide reads, in one-letter code: Provicilin (275 aa).

Positions 1–17 (DNAEIEKILLEEHEKET) are enriched in basic and acidic residues. Disordered regions lie at residues 1 to 71 (DNAE…LKSS) and 134 to 164 (LVGQ…KNQV). Residues 50–63 (NAKSSSKKSVSSRS) are compositionally biased toward low complexity. The region spanning 66–238 (FNLKSSDPIY…TFPGSAQEVD (173 aa)) is the Cupin type-1 domain. Over residues 147–157 (EEDDEEEEQRE) the composition is skewed to acidic residues.

The protein belongs to the 7S seed storage protein family.

The protein localises to the vacuole. Its subcellular location is the aleurone grain. In terms of biological role, seed storage protein. The sequence is that of Provicilin from Pisum sativum (Garden pea).